The primary structure comprises 882 residues: Valine--tRNA ligase (882 aa).

The 'HIGH' region signature appears at 45–55; the sequence is PNVTGKLHLGH. The 'KMSKS' region signature appears at 519–523; it reads KMSKS. K522 is a binding site for ATP. The stretch at 808-882 forms a coiled coil; the sequence is LADLLNVEEE…RIAEMQKLVK (75 aa).

Belongs to the class-I aminoacyl-tRNA synthetase family. ValS type 1 subfamily. As to quaternary structure, monomer.

The protein resides in the cytoplasm. It catalyses the reaction tRNA(Val) + L-valine + ATP = L-valyl-tRNA(Val) + AMP + diphosphate. Its function is as follows. Catalyzes the attachment of valine to tRNA(Val). As ValRS can inadvertently accommodate and process structurally similar amino acids such as threonine, to avoid such errors, it has a 'posttransfer' editing activity that hydrolyzes mischarged Thr-tRNA(Val) in a tRNA-dependent manner. The protein is Valine--tRNA ligase of Streptococcus pyogenes serotype M3 (strain ATCC BAA-595 / MGAS315).